A 390-amino-acid polypeptide reads, in one-letter code: Probable protein phosphatase 2C 30 (390 aa).

The segment covering 1 to 10 (MQLSKNPIKQ) has biased composition (polar residues). Disordered regions lie at residues 1 to 20 (MQLS…NYTD) and 40 to 85 (PPLV…DSET). The segment covering 44–61 (FSPTSVKTPLSSPRSSPP) has biased composition (low complexity). The 258-residue stretch at 128-385 (YYSVYCKRGR…DDISLIIIQL (258 aa)) folds into the PPM-type phosphatase domain. Residues Asp-166, Gly-167, Asp-331, and Asp-376 each contribute to the Mn(2+) site.

This sequence belongs to the PP2C family. The cofactor is Mg(2+). It depends on Mn(2+) as a cofactor.

The catalysed reaction is O-phospho-L-seryl-[protein] + H2O = L-seryl-[protein] + phosphate. It carries out the reaction O-phospho-L-threonyl-[protein] + H2O = L-threonyl-[protein] + phosphate. In Arabidopsis thaliana (Mouse-ear cress), this protein is Probable protein phosphatase 2C 30 (PP2C5).